The following is a 333-amino-acid chain: Phosphate acyltransferase (333 aa).

Belongs to the PlsX family. In terms of assembly, homodimer. Probably interacts with PlsY.

The protein localises to the cytoplasm. It catalyses the reaction a fatty acyl-[ACP] + phosphate = an acyl phosphate + holo-[ACP]. It functions in the pathway lipid metabolism; phospholipid metabolism. Catalyzes the reversible formation of acyl-phosphate (acyl-PO(4)) from acyl-[acyl-carrier-protein] (acyl-ACP). This enzyme utilizes acyl-ACP as fatty acyl donor, but not acyl-CoA. This chain is Phosphate acyltransferase, found in Helicobacter hepaticus (strain ATCC 51449 / 3B1).